A 416-amino-acid polypeptide reads, in one-letter code: Probable endo-beta-1,4-glucanase celB (416 aa).

An N-terminal signal peptide occupies residues 1–17 (MIWTLAPFVALLPLVTA). Residues asparagine 45, asparagine 104, asparagine 117, and asparagine 135 are each glycosylated (N-linked (GlcNAc...) asparagine). The Nucleophile role is filled by glutamate 214. The active-site Proton donor is glutamate 219. Asparagine 233, asparagine 278, asparagine 292, and asparagine 382 each carry an N-linked (GlcNAc...) asparagine glycan.

The protein belongs to the glycosyl hydrolase 7 (cellulase C) family.

The protein localises to the secreted. It carries out the reaction Endohydrolysis of (1-&gt;4)-beta-D-glucosidic linkages in cellulose, lichenin and cereal beta-D-glucans.. Has endoglucanase activity on substrates containing beta-1,4 glycosidic bonds, like in carboxymethylcellulose (CMC), hydroxyethylcellulose (HEC) and beta-glucan. Involved in the degradation of complex natural cellulosic substrates. The polypeptide is Probable endo-beta-1,4-glucanase celB (celB) (Aspergillus flavus (strain ATCC 200026 / FGSC A1120 / IAM 13836 / NRRL 3357 / JCM 12722 / SRRC 167)).